Consider the following 150-residue polypeptide: Large ribosomal subunit protein bL9 (150 aa).

Belongs to the bacterial ribosomal protein bL9 family.

Functionally, binds to the 23S rRNA. This chain is Large ribosomal subunit protein bL9, found in Polynucleobacter asymbioticus (strain DSM 18221 / CIP 109841 / QLW-P1DMWA-1) (Polynucleobacter necessarius subsp. asymbioticus).